A 158-amino-acid polypeptide reads, in one-letter code: Small ribosomal subunit protein bS16 (158 aa).

Low complexity predominate over residues 111-121; it reads AAAGLAEAPTK. The segment at 111–158 is disordered; the sequence is AAAGLAEAPTKPAKKAPKAEAAPKTEAAPKADAPKTEEQAGAGSGEQG. Over residues 127 to 148 the composition is skewed to basic and acidic residues; that stretch reads PKAEAAPKTEAAPKADAPKTEE.

Belongs to the bacterial ribosomal protein bS16 family.

The chain is Small ribosomal subunit protein bS16 from Salinispora arenicola (strain CNS-205).